We begin with the raw amino-acid sequence, 154 residues long: Superoxide dismutase [Cu-Zn] (154 aa).

The Cu cation site is built by His-47, His-49, and His-64. Cys-58 and Cys-147 are joined by a disulfide. Zn(2+) is bound by residues His-64, His-72, His-81, and Asp-84. His-121 is a Cu cation binding site. The segment covering 124–137 (TDDLGKGENEESKK) has biased composition (basic and acidic residues). Residues 124–144 (TDDLGKGENEESKKTGNAGTR) form a disordered region. Arg-144 is a binding site for substrate.

Belongs to the Cu-Zn superoxide dismutase family. In terms of assembly, homodimer. Cu cation is required as a cofactor. It depends on Zn(2+) as a cofactor.

It localises to the cytoplasm. It catalyses the reaction 2 superoxide + 2 H(+) = H2O2 + O2. Its function is as follows. Destroys radicals which are normally produced within the cells and which are toxic to biological systems. In Botryotinia fuckeliana (Noble rot fungus), this protein is Superoxide dismutase [Cu-Zn] (sod1).